Consider the following 507-residue polypeptide: Maturase K (507 aa).

This sequence belongs to the intron maturase 2 family. MatK subfamily.

The protein localises to the plastid. It is found in the chloroplast. Usually encoded in the trnK tRNA gene intron. Probably assists in splicing its own and other chloroplast group II introns. The polypeptide is Maturase K (Buxus microphylla (Littleleaf boxwood)).